A 242-amino-acid polypeptide reads, in one-letter code: MAGHSKWANIKHKKAAADAKRGKVWTRLIKEIQVAARMGGGDIDSNPRLRLAVEKAYDANMPKDNVNRAIQRGVGGVDGASYEEIRYEGYGIGGAAVIVDTMTDNRTRTVAEVRHAFSKNGGNMGTDGSVSFMFDHVGQFLFAPGTPEDKLMEAALEAGAEDVVTNDDGSIEVLCPPNDFPKVKSALEAAGFKAELAEVTMKPQTEVEFTGEDAVKMQKLLDALENLDDVQEVYTNAAIAEE.

The protein belongs to the TACO1 family.

It is found in the cytoplasm. This is Probable transcriptional regulatory protein Bxeno_A1185 from Paraburkholderia xenovorans (strain LB400).